Reading from the N-terminus, the 143-residue chain is UPF0299 membrane protein CGSHiEE_04225 (143 aa).

Transmembrane regions (helical) follow at residues 1–21, 33–52, 60–80, and 92–112; these read MIQK…MLSL, VPGS…TRVI, GASL…VGII, and ILLV…GFLG.

Belongs to the UPF0299 family.

The protein localises to the cell inner membrane. This Haemophilus influenzae (strain PittEE) protein is UPF0299 membrane protein CGSHiEE_04225.